The following is a 159-amino-acid chain: Protein-export protein SecB (159 aa).

The protein belongs to the SecB family. As to quaternary structure, homotetramer, a dimer of dimers. One homotetramer interacts with 1 SecA dimer.

It is found in the cytoplasm. Its function is as follows. One of the proteins required for the normal export of preproteins out of the cell cytoplasm. It is a molecular chaperone that binds to a subset of precursor proteins, maintaining them in a translocation-competent state. It also specifically binds to its receptor SecA. This Bartonella bacilliformis (strain ATCC 35685 / KC583 / Herrer 020/F12,63) protein is Protein-export protein SecB.